A 354-amino-acid polypeptide reads, in one-letter code: DNA integrity scanning protein DisA (354 aa).

A DAC domain is found at 6-144 (DDELKKILKI…GDIKYVLRDS (139 aa)). Residues G73, L91, and 104–108 (TRHRT) contribute to the ATP site.

This sequence belongs to the DisA family. As to quaternary structure, homooctamer. It depends on Mg(2+) as a cofactor.

The enzyme catalyses 2 ATP = 3',3'-c-di-AMP + 2 diphosphate. In terms of biological role, participates in a DNA-damage check-point that is active prior to asymmetric division when DNA is damaged. DisA forms globular foci that rapidly scan along the chromosomes during sporulation, searching for lesions. When a lesion is present, DisA pauses at the lesion site. This triggers a cellular response that culminates in a temporary block in sporulation initiation. Functionally, also has diadenylate cyclase activity, catalyzing the condensation of 2 ATP molecules into cyclic di-AMP (c-di-AMP). c-di-AMP acts as a signaling molecule that couples DNA integrity with progression of sporulation. The rise in c-di-AMP level generated by DisA while scanning the chromosome, operates as a positive signal that advances sporulation; upon encountering a lesion, the DisA focus arrests at the damaged site and halts c-di-AMP synthesis. In Clostridium perfringens (strain SM101 / Type A), this protein is DNA integrity scanning protein DisA.